Reading from the N-terminus, the 289-residue chain is Sphingomyelinase D (289 aa).

Positions 1-22 are cleaved as a signal peptide; it reads MQSISVLICVLLALSILNFTVA. Residue His34 is part of the active site. Glu54, Asp56, and Asp103 together coordinate Mg(2+). The SMD-tail motif lies at 282-289; sequence ATEDDAPW.

This sequence belongs to the sphingomyelinase D/phospholipase D family. Mg(2+) is required as a cofactor.

The protein resides in the secreted. The enzyme catalyses a sphingomyelin + H2O = an N-acylsphing-4-enine 1-phosphate + choline + H(+). Sphingomyelinase activity is reduced by 33 percent following addition of EDTA. Its function is as follows. Catalyzes the hydrolysis of sphingomyelin. Sphingomyelinases D are produced by some spider in their venoms, but also by arthropods such as ticks, or pathogenic bacteria and fungi. They might play a role in pathogenicity through different mechanisms, such as membrane destabilization and host cell penetration, but also pulmonary inflammation and cutaneous lesions. In Aspergillus flavus (strain ATCC 200026 / FGSC A1120 / IAM 13836 / NRRL 3357 / JCM 12722 / SRRC 167), this protein is Sphingomyelinase D.